The sequence spans 849 residues: Alanine--tRNA ligase (849 aa).

Residues His-551, His-555, Cys-653, and His-657 each contribute to the Zn(2+) site.

The protein belongs to the class-II aminoacyl-tRNA synthetase family. It depends on Zn(2+) as a cofactor.

It localises to the cytoplasm. The enzyme catalyses tRNA(Ala) + L-alanine + ATP = L-alanyl-tRNA(Ala) + AMP + diphosphate. Its function is as follows. Catalyzes the attachment of alanine to tRNA(Ala) in a two-step reaction: alanine is first activated by ATP to form Ala-AMP and then transferred to the acceptor end of tRNA(Ala). Also edits incorrectly charged Ser-tRNA(Ala) and Gly-tRNA(Ala) via its editing domain. This Sulfurimonas denitrificans (strain ATCC 33889 / DSM 1251) (Thiomicrospira denitrificans (strain ATCC 33889 / DSM 1251)) protein is Alanine--tRNA ligase.